Consider the following 141-residue polypeptide: Proteasome maturation protein (141 aa).

Lys39 is covalently cross-linked (Glycyl lysine isopeptide (Lys-Gly) (interchain with G-Cter in SUMO2)). The short motif at 68-72 (RNIQG) is the High-affinity association with the preproteasome element.

This sequence belongs to the POMP/UMP1 family. Constituent of preproteasomes, but not of mature 20S proteasomes. Within the preproteasome, may directly interact with PSMB1/beta6, PSMB4/beta7, PSMB5/beta5, PSMB6/beta1 and PSMB9/beta1i. Interaction with PSMB8/beta5i has been observed in PubMed:10973495, but not in PubMed:10926487. Forms tetramers. As to expression, strongly expressed from the basal layer to the granular layer of healthy epidermis, whereas in KLICK patients there is a gradual decrease of expression toward the granular layer.

Its subcellular location is the cytoplasm. The protein localises to the cytosol. The protein resides in the nucleus. It is found in the microsome membrane. In terms of biological role, molecular chaperone essential for the assembly of standard proteasomes and immunoproteasomes. Degraded after completion of proteasome maturation. Mediates the association of 20S preproteasome with the endoplasmic reticulum. This is Proteasome maturation protein from Homo sapiens (Human).